The primary structure comprises 250 residues: Proteasome subunit alpha type-7 (250 aa).

This sequence belongs to the peptidase T1A family. As to quaternary structure, the 26S proteasome consists of a 20S proteasome core and two 19S regulatory subunits. The 20S proteasome core is composed of 28 subunits that are arranged in four stacked rings, resulting in a barrel-shaped structure. The two end rings are each formed by seven alpha subunits, and the two central rings are each formed by seven beta subunits. The catalytic chamber with the active sites is on the inside of the barrel.

The protein localises to the cytoplasm. It localises to the nucleus. In terms of biological role, the proteasome is a multicatalytic proteinase complex which is characterized by its ability to cleave peptides with Arg, Phe, Tyr, Leu, and Glu adjacent to the leaving group at neutral or slightly basic pH. The proteasome has an ATP-dependent proteolytic activity. In Dictyostelium discoideum (Social amoeba), this protein is Proteasome subunit alpha type-7 (psmA7).